Reading from the N-terminus, the 89-residue chain is MRSVIWFIVSYTLMLLVLRGGKEVEAEKLCTTIGDLDGKCSQDGEKLCMRYMTDQSKKKFLSCTCNNVVMLHKYKHYCECQSHCTPKQT.

The signal sequence occupies residues 1–26 (MRSVIWFIVSYTLMLLVLRGGKEVEA). 4 disulfide bridges follow: C30–C84, C40–C65, C48–C78, and C63–C80.

It belongs to the DEFL family.

The protein localises to the secreted. This is Putative defensin-like protein 230 (SCRL24) from Arabidopsis thaliana (Mouse-ear cress).